We begin with the raw amino-acid sequence, 74 residues long: Defensin (74 aa).

Residues 1–21 (MRGIYICLVFVLVCGLVSGLA) form the signal peptide. Residues 22–34 (DVPAESEMAHLRV) constitute a propeptide that is removed on maturation. 3 disulfide bridges follow: Cys-40/Cys-61, Cys-47/Cys-69, and Cys-51/Cys-71.

As to expression, expressed in the hemocytes, fat body and ovaries.

The protein localises to the secreted. Its function is as follows. Antibacterial peptide mostly active against Gram-positive bacteria. The chain is Defensin from Rhipicephalus microplus (Cattle tick).